The sequence spans 319 residues: Ribonucleoside-diphosphate reductase small chain (319 aa).

Residues Asp-70, Glu-101, and His-104 each contribute to the Fe cation site. Tyr-108 is a catalytic residue. 3 residues coordinate Fe cation: Glu-163, Glu-197, and His-200. Residues 313–319 (FSLDVDF) form an interaction with R1 region.

It belongs to the ribonucleoside diphosphate reductase small chain family. As to quaternary structure, interacts with RNR1/OPG080 subunit. Can interact with host RNR1 supunit. It depends on Fe cation as a cofactor.

The catalysed reaction is a 2'-deoxyribonucleoside 5'-diphosphate + [thioredoxin]-disulfide + H2O = a ribonucleoside 5'-diphosphate + [thioredoxin]-dithiol. Ribonucleoside-diphosphate reductase holoenzyme provides the precursors necessary for viral DNA synthesis. Allows virus growth in non-dividing cells. Catalyzes the biosynthesis of deoxyribonucleotides from the corresponding ribonucleotides. The protein is Ribonucleoside-diphosphate reductase small chain (OPG048) of Vaccinia virus (strain Ankara) (VACV).